The sequence spans 5478 residues: Mucin-12 (5478 aa).

The N-terminal stretch at 1 to 16 (MLVIWILTLALRLCAS) is a signal peptide. The Extracellular segment spans residues 17–5380 (VTTVTPEGSA…EFNIAKSLVY (5364 aa)). Asparagine 154, asparagine 170, and asparagine 176 each carry an N-linked (GlcNAc...) asparagine glycan. Residues 212–737 (LDSSTNSGHS…GSTETTLLPD (526 aa)) form a disordered region. Residues 222-240 (EESTVSHSGPGATGTTLFP) form repeat 1. The 28 X 19 AA approximate tandem repeats of E-E-S-X-X-X-H-X-X-P-X-X-T-X-T-X-X-X-P stretch occupies residues 222–4761 (EESTVSHSGP…PGSTQTMHFP (4540 aa)). 4 stretches are compositionally biased toward polar residues: residues 226–246 (VSHS…SATS), 255–288 (SPIT…SSPR), 296–313 (PART…TSHS), and 325–342 (DSTT…SHSI). The span at 343-366 (PGSTDTTLSPGTTTPSSLGPESTT) shows a compositional bias: low complexity. Positions 367 to 387 (FHSSPGYTKTTRLPDNTTTSG) are enriched in polar residues. An N-linked (GlcNAc...) asparagine glycan is attached at asparagine 382. The span at 396–413 (HSSTGSPHTTLSPSSSTT) shows a compositional bias: low complexity. The span at 419–440 (TTFQSWPSSKDTSPAPSGTTSA) shows a compositional bias: polar residues. 2 stretches are compositionally biased toward low complexity: residues 445–466 (STTY…SSTT) and 478–495 (SSPV…SATS). 2 repeat units span residues 471 to 489 (EEST…TPPP) and 499 to 517 (EEST…MHFP). Over residues 531-554 (TFHGSTTHTKSSTPSTTAALAHTS) the composition is skewed to low complexity. Composition is skewed to polar residues over residues 555–575 (YHSS…TISG) and 608–648 (STPS…SPDT). Residues 654–669 (SMTSSGVSEESTTSHS) show a composition bias toward low complexity. Residues 662–680 (EESTTSHSRPGSTHTTAFP) form repeat 4. Polar residues-rich tracts occupy residues 670-715 (RPGS…TASS) and 722-737 (TFHS…LLPD). An N-linked (GlcNAc...) asparagine glycan is attached at asparagine 738. Disordered regions lie at residues 749–4847 (MPVH…HFTT), 4887–5034 (SSRS…THTV), 5048–5071 (STAF…TASD), and 5093–5112 (ASSS…TSPS). 2 stretches are compositionally biased toward polar residues: residues 751–783 (VHSS…WPSS) and 792–842 (TTTS…TQTM). Copy 5 of the repeat occupies 827-845 (EESTTYHSSPGSTQTMHFP). Residues 859 to 877 (TSHSSTTHTISSAPSTTSA) are compositionally biased toward low complexity. Composition is skewed to polar residues over residues 884–899 (SYHS…HFPD) and 928–970 (RSTT…TTFH). Residues 971–1007 (SSPRSPATTLSPASTTSSGVSEESTTSRSRPGSTHTT) are compositionally biased toward low complexity. Over residues 1009-1021 (FPDSTTTPGLSRH) the composition is skewed to polar residues. The span at 1022–1065 (STTSHSSPGSTDTTLLPASTTTSGPSQESTTSHSSSGSTDTALS) shows a compositional bias: low complexity. Composition is skewed to polar residues over residues 1066-1101 (PGST…TSSG) and 1108-1138 (RVHS…TAFQ). Over residues 1139–1157 (THPASTHTTPSPPSTATAP) the composition is skewed to low complexity. Repeat 6 spans residues 1159 to 1177 (EESTTYHRSPGSTPTTHFP). 2 stretches are compositionally biased toward polar residues: residues 1160–1184 (ESTT…TTSG) and 1191–1207 (IFHS…SSAH). 3 stretches are compositionally biased toward low complexity: residues 1208 to 1220 (STTS…TTSR), 1229 to 1241 (TTLP…PGLS), and 1249 to 1262 (SSPR…SPAS). Polar residues-rich tracts occupy residues 1271 to 1324 (ESTT…TTSV), 1331 to 1357 (TFHS…TEES), and 1364 to 1377 (PAST…TLTT). 2 stretches are compositionally biased toward low complexity: residues 1384–1396 (STTF…STGT) and 1411–1438 (ESTP…SLSE). A compositionally biased stretch (polar residues) spans 1439–1448 (KSTTFYTSPR). Positions 1458–1481 (TTTSSGVSEESSTSHSQPGSTHTT) are enriched in low complexity. Repeat unit 7 spans residues 1466–1484 (EESSTSHSQPGSTHTTAFP). Residues 1483-1537 (FPDSTTTSDLSQEPTTSHSSQGSTEATLSPGSTTASSLGQQSTTFHSSPGDTETT) show a composition bias toward polar residues. A compositionally biased stretch (low complexity) spans 1552 to 1568 (STPTHSSTGSLHTTLTP). Composition is skewed to polar residues over residues 1569–1586 (ASST…FQSW) and 1606–1630 (VSTT…TTLG). Repeat 8 spans residues 1633–1651 (EESTTVHSSPGATGTALFP). Positions 1653-1708 (RSATSVLVGEPTTSPISSGSTETTALPGSTTTAGLSEKSTTFYSSPRSPDTTLSPA) are enriched in polar residues. The span at 1709–1724 (STTSSGVSEESTTSHS) shows a compositional bias: low complexity. Repeat 9 spans residues 1717 to 1735 (EESTTSHSRPGSTHTTAFP). Composition is skewed to polar residues over residues 1725 to 1797 (RPGS…TTAS) and 1805 to 1840 (PVHS…SSKD). Asparagine 1793 carries an N-linked (GlcNAc...) asparagine glycan. Composition is skewed to low complexity over residues 1856–1877 (STTS…SSTT) and 1889–1906 (SSPV…STTS). A run of 2 repeats spans residues 1882-1900 (EEST…TPSP) and 1910-1928 (EEST…MHFP). Residues 1914-1935 (AYHSSPGSTQTMHFPESSTASG) are compositionally biased toward polar residues. Positions 1943 to 1959 (SHSSTTHTISSPPSTTS) are enriched in low complexity. Polar residues-rich tracts occupy residues 1967-1982 (SYHS…HFPD) and 2011-2053 (RSTT…TTFH). The segment covering 2054–2082 (SSPRSPATTLSPASTTSSGVSEESTTSHS) has biased composition (low complexity). Repeat 12 spans residues 2075-2093 (EESTTSHSRPGSTHTTAFP). Residues 2083–2104 (RPGSTHTTAFPDSTTTPGLSRH) are compositionally biased toward polar residues. Over residues 2105–2130 (STTSHSSPGSTDTTLLPASTTTSGPS) the composition is skewed to low complexity. Polar residues-rich tracts occupy residues 2131–2184 (QEST…TSSG) and 2191–2221 (RVHS…TAFQ). The span at 2222–2240 (THPASTHTTPSPPSTATAP) shows a compositional bias: low complexity. Repeat unit 13 spans residues 2242–2260 (EESTTYHRSPGSTPTTHFP). 2 stretches are compositionally biased toward polar residues: residues 2243 to 2267 (ESTT…TTSG) and 2274 to 2290 (IFHS…SSAH). Low complexity-rich tracts occupy residues 2291–2303 (STTS…TTSR), 2312–2324 (TTLP…PGLS), and 2332–2345 (SSPR…SPAS). Polar residues predominate over residues 2354 to 2392 (ESTTSRSQPGSTHSTVSPASTTTPGLSEESTTVYSSSPG). Residues 2393–2407 (STETTVFPRTPTTSV) are compositionally biased toward low complexity. Polar residues-rich tracts occupy residues 2414–2440 (TFHS…TEES) and 2447–2460 (PAST…TLTT). Composition is skewed to low complexity over residues 2467–2483 (STTF…TLSP) and 2494–2521 (ESTP…SLSE). Residues 2522-2531 (KSTTFYTSPR) show a composition bias toward polar residues. Low complexity predominate over residues 2541 to 2564 (TTTSSGVSEESSTSHSQPGSTHTT). Repeat 14 spans residues 2549–2567 (EESSTSHSQPGSTHTTAFP). Positions 2566-2578 (FPDSTTTPGLSRH) are enriched in polar residues. The span at 2579–2604 (STTSHSSPGSTDTTLLPASTTTSGPS) shows a compositional bias: low complexity. Polar residues-rich tracts occupy residues 2605–2658 (QEST…TSSG) and 2665–2695 (RVHS…TTFQ). Residues 2696–2714 (THPASTHTTPSPPSTATAP) are compositionally biased toward low complexity. The stretch at 2716 to 2734 (EESTTYHRSPGSTPTTHFP) is repeat 15. 2 stretches are compositionally biased toward polar residues: residues 2717 to 2741 (ESTT…TTSG) and 2748 to 2764 (IFHS…SSAH). Composition is skewed to low complexity over residues 2765–2777 (STTS…TTSR), 2786–2798 (TTLP…PGLS), and 2806–2819 (SSPR…SPAS). Composition is skewed to polar residues over residues 2828 to 2881 (ESTT…TTSV), 2888 to 2914 (TFHS…TEES), and 2921 to 2934 (PAST…TLTT). Composition is skewed to low complexity over residues 2941–2957 (STTF…TLSP) and 2968–2995 (ESTP…SLSE). Residues 2996–3005 (KSTTFYTSPR) are compositionally biased toward polar residues. A compositionally biased stretch (low complexity) spans 3015 to 3038 (TTTSSGVSEESSTSHSQPGSTHTT). Repeat unit 16 spans residues 3023 to 3041 (EESSTSHSQPGSTHTTAFP). The segment covering 3040–3094 (FPDSTTTSGLSQEPTASHSSQGSTEATLSPGSTTASSLGQQSTTFHSSPGDTETT) has biased composition (polar residues). Residues 3109–3125 (STPTHSSTGSLHTTLTP) show a composition bias toward low complexity. Composition is skewed to polar residues over residues 3126 to 3143 (ASST…FQSW) and 3163 to 3187 (VSTT…TTLG). Repeat unit 17 spans residues 3190–3208 (EESTTVHSSPGATGTALFP). A compositionally biased stretch (polar residues) spans 3210–3265 (RSATSVLVGEPTTSPISSGSTETTALPGSTTTAGLSEKSTTFYSSPRSPDTTLSPA). Over residues 3266-3281 (STTSSGVSEESTTSHS) the composition is skewed to low complexity. Copy 18 of the repeat occupies 3274 to 3292 (EESTTSHSRPGSTHTTAFP). Polar residues-rich tracts occupy residues 3282–3354 (RPGS…TTAS) and 3362–3397 (PVHS…NSKD). N-linked (GlcNAc...) asparagine glycosylation is present at asparagine 3350. 2 stretches are compositionally biased toward low complexity: residues 3413–3434 (STTS…SSTT) and 3446–3463 (SSPV…STTS). 2 repeat units span residues 3439-3457 (EEST…TPSP) and 3467-3485 (EEST…MHFP). Positions 3468–3482 (ESTTYHSSPGSTQTM) are enriched in polar residues. Positions 3499–3517 (TSHSSTTHTISSAPSTTSA) are enriched in low complexity. Polar residues-rich tracts occupy residues 3524–3539 (SYHS…HFPD) and 3568–3610 (RSTT…TTFH). A compositionally biased stretch (low complexity) spans 3611 to 3639 (SSPRSPATTLSPASTTSSGVSEESTTSHS). Residues 3632–3650 (EESTTSHSRPGSTHTTAFP) form repeat 21. The span at 3640-3661 (RPGSTHTTAFPDSTTTPGLSRH) shows a compositional bias: polar residues. Residues 3662–3705 (STTSHSSPGSTDTTLLPASTTTSGSSQESTTSHSSSGSTDTALS) are compositionally biased toward low complexity. Composition is skewed to polar residues over residues 3706-3741 (PGST…TSSG) and 3748-3778 (RVHS…TAFQ). Residues 3779 to 3797 (THPASTHTTPSPPSTATAP) are compositionally biased toward low complexity. Repeat unit 22 spans residues 3799–3817 (EESTTYHRSPGSTPTTHFP). Polar residues-rich tracts occupy residues 3800–3824 (ESTT…TTSG) and 3831–3847 (IFHS…SSAH). Composition is skewed to low complexity over residues 3848 to 3860 (STTS…TTSR), 3869 to 3881 (TTLP…PGLS), and 3889 to 3902 (SSPR…SPAS). Polar residues-rich tracts occupy residues 3911-3963 (ESTT…TTTS), 3971-3997 (TFHS…TEES), and 4004-4017 (PAST…TLTT). Composition is skewed to low complexity over residues 4024 to 4036 (STTF…STGT) and 4051 to 4078 (ESTP…SLSE). Residues 4079–4088 (KSTTFYTSPR) show a composition bias toward polar residues. A compositionally biased stretch (low complexity) spans 4098–4121 (TTTSSGVSEESSTSHSQPGSTHTT). The stretch at 4106 to 4124 (EESSTSHSQPGSTHTTAFP) is repeat 23. Over residues 4123-4177 (FPDSTTTSGLSQEPTTSHSSQGSTEATLSPGSTTASSLGQQSTTFHSSPGDTETT) the composition is skewed to polar residues. Residues 4192–4208 (STPTHSSTGSLHTTLTP) show a composition bias toward low complexity. The span at 4209-4226 (ASSTSTGLQEESTTFQSW) shows a compositional bias: polar residues. Residues 4227–4249 (PSSSDTTPSPPSTTAVPVEVSTT) show a composition bias toward low complexity. Polar residues predominate over residues 4250 to 4270 (YHSRPSSTPTTHFSASSTTLG). Repeat 24 spans residues 4273–4291 (EESTTVHSSPGATGTALFP). A compositionally biased stretch (polar residues) spans 4293-4348 (RSATSVLVGEPTTSPISSGSTETTALPGSTTTAGLSEKSTTFYSSPRSPDTTLSPA). Residues 4349-4364 (STTSSGVSEESTTSHS) are compositionally biased toward low complexity. Composition is skewed to polar residues over residues 4369 to 4437 (MHTT…TTAS) and 4445 to 4480 (PVHS…NSKD). Asparagine 4433 carries an N-linked (GlcNAc...) asparagine glycan. Low complexity-rich tracts occupy residues 4496 to 4517 (STTS…SSTT) and 4529 to 4546 (SSPV…STTS). 2 tandem repeats follow at residues 4522–4540 (EEST…TPSP) and 4550–4568 (EEST…MHFP). Over residues 4551 to 4571 (ESTTYHSSPGSTQTMHFPESN) the composition is skewed to polar residues. N-linked (GlcNAc...) asparagine glycosylation is present at asparagine 4571. A compositionally biased stretch (low complexity) spans 4582 to 4600 (TSHSSTTHTISSAPSTTSA). Polar residues-rich tracts occupy residues 4607–4622 (SYHS…HFPD) and 4651–4688 (RSTT…LSEK). 2 stretches are compositionally biased toward low complexity: residues 4689–4710 (STTF…SSTT) and 4722–4739 (SSPV…STTS). 2 consecutive repeat copies span residues 4715-4733 (EEST…TPSP) and 4743-4761 (EEST…MHFP). The segment covering 4747-4768 (AYHSSPGSTQTMHFPESSTASG) has biased composition (polar residues). Low complexity predominate over residues 4776–4792 (SHSSTTHTISSPPSTTS). 2 stretches are compositionally biased toward polar residues: residues 4800–4814 (SYHS…THFP) and 4887–4917 (SSRS…SQAE). Low complexity predominate over residues 4918–4931 (STHTTAFPASTTTS). Composition is skewed to polar residues over residues 4932–5024 (GLSQ…STPF) and 5048–5061 (STAF…TGTT). Low complexity predominate over residues 5094–5112 (SSSTSGLTEESTTFHTSPS). One can recognise an EGF-like domain in the interval 5116–5154 (TIVSTESLETLAPGLCQEGQIWNGKQCVCPQGYVGYQCL). The cysteines at positions 5144 and 5153 are disulfide-linked. One can recognise an SEA domain in the interval 5168 to 5275 (LNATLGMTVK…TRTTLLDPDS (108 aa)). N-linked (GlcNAc...) asparagine glycosylation is found at asparagine 5169, asparagine 5182, asparagine 5197, asparagine 5228, and asparagine 5264. The Cleavage motif motif lies at 5226–5233 (LLNGSIVV). Residues 5381–5401 (GIVGAVMAVLLLALIILIILF) traverse the membrane as a helical segment. Residues 5402–5478 (SLSQRKRHRE…QRPEMVASTV (77 aa)) are Cytoplasmic-facing.

In terms of tissue distribution, ubiquitous, with higher expression in colon. Down-regulated in colorectal cancer as well as in the colon of patients with ulcerative colitis (UC) and Crohn's disease (CD).

The protein resides in the membrane. Functionally, involved in epithelial cell protection, adhesion modulation, and signaling. May be involved in epithelial cell growth regulation. Stimulated by both cytokine TNF-alpha and TGF-beta in intestinal epithelium. This Homo sapiens (Human) protein is Mucin-12 (MUC12).